The sequence spans 557 residues: Formate--tetrahydrofolate ligase (557 aa).

44–51 (TPLGEGKS) is an ATP binding site.

It belongs to the formate--tetrahydrofolate ligase family.

The enzyme catalyses (6S)-5,6,7,8-tetrahydrofolate + formate + ATP = (6R)-10-formyltetrahydrofolate + ADP + phosphate. Its pathway is one-carbon metabolism; tetrahydrofolate interconversion. The chain is Formate--tetrahydrofolate ligase from Desulfotalea psychrophila (strain LSv54 / DSM 12343).